The chain runs to 422 residues: Dihydroorotase (422 aa).

Zn(2+)-binding residues include His-59 and His-61. Residues 61 to 63 (HFR) and Asn-93 contribute to the substrate site. Asp-150, His-177, and His-230 together coordinate Zn(2+). Asn-276 is a substrate binding site. Asp-303 serves as a coordination point for Zn(2+). Asp-303 is an active-site residue. Position 307 (His-307) interacts with substrate.

It belongs to the metallo-dependent hydrolases superfamily. DHOase family. Class I DHOase subfamily. The cofactor is Zn(2+).

It catalyses the reaction (S)-dihydroorotate + H2O = N-carbamoyl-L-aspartate + H(+). It participates in pyrimidine metabolism; UMP biosynthesis via de novo pathway; (S)-dihydroorotate from bicarbonate: step 3/3. In terms of biological role, catalyzes the reversible cyclization of carbamoyl aspartate to dihydroorotate. This is Dihydroorotase from Streptococcus pneumoniae serotype 4 (strain ATCC BAA-334 / TIGR4).